Consider the following 279-residue polypeptide: 4-diphosphocytidyl-2-C-methyl-D-erythritol kinase (279 aa).

Lys-11 is a catalytic residue. 95–105 is a binding site for ATP; it reads PVAAGLGGGSS. The active site involves Asp-137.

It belongs to the GHMP kinase family. IspE subfamily.

It carries out the reaction 4-CDP-2-C-methyl-D-erythritol + ATP = 4-CDP-2-C-methyl-D-erythritol 2-phosphate + ADP + H(+). It functions in the pathway isoprenoid biosynthesis; isopentenyl diphosphate biosynthesis via DXP pathway; isopentenyl diphosphate from 1-deoxy-D-xylulose 5-phosphate: step 3/6. Functionally, catalyzes the phosphorylation of the position 2 hydroxy group of 4-diphosphocytidyl-2C-methyl-D-erythritol. The polypeptide is 4-diphosphocytidyl-2-C-methyl-D-erythritol kinase (Geotalea daltonii (strain DSM 22248 / JCM 15807 / FRC-32) (Geobacter daltonii)).